The chain runs to 508 residues: Lysine--tRNA ligase (508 aa).

Residues Glu403 and Glu410 each contribute to the Mg(2+) site.

The protein belongs to the class-II aminoacyl-tRNA synthetase family. Homodimer. Requires Mg(2+) as cofactor.

Its subcellular location is the cytoplasm. It catalyses the reaction tRNA(Lys) + L-lysine + ATP = L-lysyl-tRNA(Lys) + AMP + diphosphate. The protein is Lysine--tRNA ligase of Methanoculleus marisnigri (strain ATCC 35101 / DSM 1498 / JR1).